The sequence spans 458 residues: Bifunctional protein GlmU (458 aa).

The tract at residues 1–224 is pyrophosphorylase; the sequence is MTVIALAAGK…PKVAVGVNNQ (224 aa). UDP-N-acetyl-alpha-D-glucosamine is bound by residues 6 to 9, K20, Q71, and 76 to 77; these read LAAG and GT. D99 is a Mg(2+) binding site. G136, E150, N165, and N222 together coordinate UDP-N-acetyl-alpha-D-glucosamine. N222 serves as a coordination point for Mg(2+). The tract at residues 225–245 is linker; that stretch reads LELARATRLLFKRKALRLMED. The N-acetyltransferase stretch occupies residues 246-458; it reads GVLMIDPRTV…TAETEEKEQV (213 aa). Residues R328 and K346 each contribute to the UDP-N-acetyl-alpha-D-glucosamine site. H358 (proton acceptor) is an active-site residue. UDP-N-acetyl-alpha-D-glucosamine contacts are provided by Y361 and N372. Acetyl-CoA contacts are provided by residues 381-382, S401, S419, and R436; that span reads NY.

In the N-terminal section; belongs to the N-acetylglucosamine-1-phosphate uridyltransferase family. This sequence in the C-terminal section; belongs to the transferase hexapeptide repeat family. In terms of assembly, homotrimer. It depends on Mg(2+) as a cofactor.

The protein resides in the cytoplasm. The catalysed reaction is alpha-D-glucosamine 1-phosphate + acetyl-CoA = N-acetyl-alpha-D-glucosamine 1-phosphate + CoA + H(+). It catalyses the reaction N-acetyl-alpha-D-glucosamine 1-phosphate + UTP + H(+) = UDP-N-acetyl-alpha-D-glucosamine + diphosphate. Its pathway is nucleotide-sugar biosynthesis; UDP-N-acetyl-alpha-D-glucosamine biosynthesis; N-acetyl-alpha-D-glucosamine 1-phosphate from alpha-D-glucosamine 6-phosphate (route II): step 2/2. It functions in the pathway nucleotide-sugar biosynthesis; UDP-N-acetyl-alpha-D-glucosamine biosynthesis; UDP-N-acetyl-alpha-D-glucosamine from N-acetyl-alpha-D-glucosamine 1-phosphate: step 1/1. It participates in bacterial outer membrane biogenesis; LPS lipid A biosynthesis. In terms of biological role, catalyzes the last two sequential reactions in the de novo biosynthetic pathway for UDP-N-acetylglucosamine (UDP-GlcNAc). The C-terminal domain catalyzes the transfer of acetyl group from acetyl coenzyme A to glucosamine-1-phosphate (GlcN-1-P) to produce N-acetylglucosamine-1-phosphate (GlcNAc-1-P), which is converted into UDP-GlcNAc by the transfer of uridine 5-monophosphate (from uridine 5-triphosphate), a reaction catalyzed by the N-terminal domain. The polypeptide is Bifunctional protein GlmU (Bdellovibrio bacteriovorus (strain ATCC 15356 / DSM 50701 / NCIMB 9529 / HD100)).